A 463-amino-acid chain; its full sequence is Chitobiosyldiphosphodolichol beta-mannosyltransferase (463 aa).

Residues 1–3 (MKA) are Lumenal-facing. A helical membrane pass occupies residues 4–24 (WHWSVTLVVIYLAIPVILYLL). The Cytoplasmic portion of the chain corresponds to 25-105 (TRKDDRKPLS…PLILNTRKLP (81 aa)). An intramembrane region (helical) is located at residues 106-126 (FVVFGILKVIRQHWLLISLLY). Over 127–463 (KLRGADYLLV…FSSSSSDDDH (337 aa)) the chain is Lumenal.

This sequence belongs to the glycosyltransferase group 1 family.

It is found in the endoplasmic reticulum membrane. The enzyme catalyses an N,N'-diacetylchitobiosyl-diphospho-di-trans,poly-cis-dolichol + GDP-alpha-D-mannose = a beta-D-Man-(1-&gt;4)-beta-D-GlcNAc-(1-&gt;4)-alpha-D-GlcNAc-diphospho-di-trans,poly-cis-dolichol + GDP + H(+). The protein operates within protein modification; protein glycosylation. Its function is as follows. Participates in the formation of the lipid-linked precursor oligosaccharide for N-glycosylation. Involved in assembling the dolichol-pyrophosphate-GlcNAc(2)-Man(5) intermediate on the cytoplasmic surface of the ER. The protein is Chitobiosyldiphosphodolichol beta-mannosyltransferase (ALG1) of Yarrowia lipolytica (strain CLIB 122 / E 150) (Yeast).